A 261-amino-acid polypeptide reads, in one-letter code: Imidazole glycerol phosphate synthase subunit HisF (261 aa).

Catalysis depends on residues D16 and D135.

The protein belongs to the HisA/HisF family. Heterodimer of HisH and HisF.

The protein localises to the cytoplasm. It carries out the reaction 5-[(5-phospho-1-deoxy-D-ribulos-1-ylimino)methylamino]-1-(5-phospho-beta-D-ribosyl)imidazole-4-carboxamide + L-glutamine = D-erythro-1-(imidazol-4-yl)glycerol 3-phosphate + 5-amino-1-(5-phospho-beta-D-ribosyl)imidazole-4-carboxamide + L-glutamate + H(+). It functions in the pathway amino-acid biosynthesis; L-histidine biosynthesis; L-histidine from 5-phospho-alpha-D-ribose 1-diphosphate: step 5/9. IGPS catalyzes the conversion of PRFAR and glutamine to IGP, AICAR and glutamate. The HisF subunit catalyzes the cyclization activity that produces IGP and AICAR from PRFAR using the ammonia provided by the HisH subunit. The chain is Imidazole glycerol phosphate synthase subunit HisF from Mycobacterium sp. (strain JLS).